A 44-amino-acid chain; its full sequence is Photosystem I reaction center subunit IX (44 aa).

A helical membrane pass occupies residues 7-27 (YLSTAPVLAILCVSFLAALLI).

Belongs to the PsaJ family.

It localises to the plastid. It is found in the chloroplast thylakoid membrane. In terms of biological role, may help in the organization of the PsaE and PsaF subunits. In Pinus thunbergii (Japanese black pine), this protein is Photosystem I reaction center subunit IX.